A 90-amino-acid chain; its full sequence is MTRTVLCRKYKQELPGLDRAPYPGPKGEDIFANVSKQAWDEWQKHQTMLINERRLNMMNAEDRKFLQTEMDKFLSGEEYAQAEGYVPPSE.

Belongs to the Fe(2+)-trafficking protein family.

Functionally, could be a mediator in iron transactions between iron acquisition and iron-requiring processes, such as synthesis and/or repair of Fe-S clusters in biosynthetic enzymes. This chain is Probable Fe(2+)-trafficking protein, found in Ectopseudomonas mendocina (strain ymp) (Pseudomonas mendocina).